A 553-amino-acid chain; its full sequence is uncharacterized protein (553 aa).

5 helical membrane passes run 13–30, 37–59, 69–91, 98–120, and 157–179; these read ALQAVVVLSLISAIGLGL, GISLGVTFVFFAGILAGHFGLSI, SFGLIIFVYALGLQVGPGFFSSF, LNMLAIAVVILGTFLAVVCSYTT, and TPALGCAVAYPLGVIGVILAVLL. 2 consecutive RCK C-terminal domains span residues 190–273 and 281–365; these read LEVQ…LFGE and KEDI…VLGN. A run of 6 helical transmembrane segments spans residues 375–397, 402–424, 436–458, 468–490, 497–514, and 529–551; these read LVAVFVGIILGLALGAVPFSIPG, VRLGLAGGPIIVGILIGTFGPRL, LMLRALGLSLYLACLGLDAGAHF, LLWIGLGFGLTLVPTVLVGFFAF, FGSVSGMLCGSMANPMAL, and AYATVYPLSMFLRVIIAQVLLMF.

Belongs to the AAE transporter (TC 2.A.81) family.

The protein resides in the cell membrane. This is an uncharacterized protein from Bacteroides fragilis (strain YCH46).